We begin with the raw amino-acid sequence, 683 residues long: PTS system mannose-specific EIIBCA component (683 aa).

The 89-residue stretch at methionine 1–alanine 89 folds into the PTS EIIB type-1 domain. Catalysis depends on cysteine 28, which acts as the Phosphocysteine intermediate; for EIIB activity. In terms of domain architecture, PTS EIIC type-1 spans glutamate 117–lysine 476. 10 consecutive transmembrane segments (helical) span residues isoleucine 126–phenylalanine 146, tyrosine 162–alanine 182, tryptophan 193–alanine 213, valine 225–tryptophan 245, methionine 260–glycine 280, phenylalanine 303–tryptophan 323, proline 344–isoleucine 364, leucine 376–leucine 396, glycine 409–phenylalanine 429, and leucine 442–leucine 462. Residues aspartate 550 to asparagine 654 form the PTS EIIA type-1 domain. The active-site Tele-phosphohistidine intermediate; for EIIA activity is histidine 602.

Its subcellular location is the cell membrane. It carries out the reaction D-mannose(out) + N(pros)-phospho-L-histidyl-[protein] = D-mannose 6-phosphate(in) + L-histidyl-[protein]. In terms of biological role, the phosphoenolpyruvate-dependent sugar phosphotransferase system (sugar PTS), a major carbohydrate active -transport system, catalyzes the phosphorylation of incoming sugar substrates concomitantly with their translocation across the cell membrane. This system is involved in mannose transport. In Corynebacterium glutamicum (strain ATCC 13032 / DSM 20300 / JCM 1318 / BCRC 11384 / CCUG 27702 / LMG 3730 / NBRC 12168 / NCIMB 10025 / NRRL B-2784 / 534), this protein is PTS system mannose-specific EIIBCA component (ptsM).